Here is a 205-residue protein sequence, read N- to C-terminus: MIAKLKGILDSITDSYLIIDINGVGYQVYSSGKTLMKLIKEEGSIVSLFIETHVREDRIHLFGFLDNTEKVAFNMLQSVSGIGTKMALHILSNLTPHQLQIAISSQNRHQLKAISGVGPKLIDRLMIELRDKVANINTIANNTSLAILSTDSNTHDNILSDAITALIALGISRAEATQILSDIYALFPSISVNELVRTALQRRAK.

Residues 1–65 (MIAKLKGILD…EDRIHLFGFL (65 aa)) form a domain I region. Residues 66–144 (DNTEKVAFNM…NINTIANNTS (79 aa)) form a domain II region. The interval 145–153 (LAILSTDSN) is flexible linker. Residues 154–205 (THDNILSDAITALIALGISRAEATQILSDIYALFPSISVNELVRTALQRRAK) form a domain III region.

This sequence belongs to the RuvA family. As to quaternary structure, homotetramer. Forms an RuvA(8)-RuvB(12)-Holliday junction (HJ) complex. HJ DNA is sandwiched between 2 RuvA tetramers; dsDNA enters through RuvA and exits via RuvB. An RuvB hexamer assembles on each DNA strand where it exits the tetramer. Each RuvB hexamer is contacted by two RuvA subunits (via domain III) on 2 adjacent RuvB subunits; this complex drives branch migration. In the full resolvosome a probable DNA-RuvA(4)-RuvB(12)-RuvC(2) complex forms which resolves the HJ.

The protein resides in the cytoplasm. Its function is as follows. The RuvA-RuvB-RuvC complex processes Holliday junction (HJ) DNA during genetic recombination and DNA repair, while the RuvA-RuvB complex plays an important role in the rescue of blocked DNA replication forks via replication fork reversal (RFR). RuvA specifically binds to HJ cruciform DNA, conferring on it an open structure. The RuvB hexamer acts as an ATP-dependent pump, pulling dsDNA into and through the RuvAB complex. HJ branch migration allows RuvC to scan DNA until it finds its consensus sequence, where it cleaves and resolves the cruciform DNA. The chain is Holliday junction branch migration complex subunit RuvA from Orientia tsutsugamushi (strain Boryong) (Rickettsia tsutsugamushi).